A 468-amino-acid chain; its full sequence is Protein phosphatase ppm-1.A (468 aa).

Residues 1 to 23 are disordered; that stretch reads MTISRADLQIASSAEPKTHGNLN. Residues 106 to 381 enclose the PPM-type phosphatase domain; the sequence is RYGMSSMQGW…DNMTMVVVCF (276 aa). Mn(2+)-binding residues include aspartate 145, glycine 146, aspartate 329, and aspartate 372.

It belongs to the PP2C family. It depends on Mg(2+) as a cofactor. Mn(2+) serves as cofactor. As to expression, expressed in neurons of the nerve ring and motor neurons of the ventral nerve cord.

It localises to the synapse. It carries out the reaction O-phospho-L-seryl-[protein] + H2O = L-seryl-[protein] + phosphate. The catalysed reaction is O-phospho-L-threonyl-[protein] + H2O = L-threonyl-[protein] + phosphate. Functionally, probable phosphatase which regulates axon termination in ALM and PLM neurons, and synaptic branch extension and/or stabilization in PLM neurons. Plays a role in synapse formation in GABAergic DD motor neurons probably by dephosphorylating pmk-3 thereby negatively regulating a MAP kinase pathway that includes dlk-1, mkk-4 and pmk-3. This chain is Protein phosphatase ppm-1.A, found in Caenorhabditis elegans.